We begin with the raw amino-acid sequence, 379 residues long: Sperm microtubule associated protein 2 (379 aa).

The tract at residues 1–82 is disordered; that stretch reads MGDSRRRSLG…EFPETLDPKE (82 aa). 2 stretches are compositionally biased toward basic and acidic residues: residues 19–29 and 38–50; these read GRSEREQDGDP and ESRR…RQDL. The span at 56 to 76 shows a compositional bias: acidic residues; the sequence is GPEDPEEELPPEEVAGEEFPE. THEG repeat units follow at residues 118-137, 184-203, 222-241, 258-277, 290-309, and 326-345; these read KARK…PKIN, TITV…PKRF, SSLE…PKIR, AAQM…PKAP, PKPH…PKAQ, and VTKK…PKVR. Residue Ser295 is modified to Phosphoserine. Positions 344–379 are disordered; the sequence is VRKGLNEGYDRRPLASMSLPPPKASPEKCDQPRPGL. Composition is skewed to basic and acidic residues over residues 347-356 and 368-379; these read GLNEGYDRRP and SPEKCDQPRPGL.

As to quaternary structure, interacts with CCT5. As to expression, testis specific.

The protein resides in the nucleus. May be involved (but not essential) in spermatogenesis. In Homo sapiens (Human), this protein is Sperm microtubule associated protein 2.